A 198-amino-acid chain; its full sequence is Na(+)-translocating NADH-quinone reductase subunit E (198 aa).

The next 6 helical transmembrane spans lie at 11–31, 40–60, 77–97, 110–130, 140–160, and 176–196; these read SIFI…FLAV, GLGI…NLVF, FLGF…LEMF, GIFL…SFMV, VVYG…MAAI, and LGIT…FSGI.

Belongs to the NqrDE/RnfAE family. As to quaternary structure, composed of six subunits; NqrA, NqrB, NqrC, NqrD, NqrE and NqrF.

The protein resides in the cell inner membrane. It carries out the reaction a ubiquinone + n Na(+)(in) + NADH + H(+) = a ubiquinol + n Na(+)(out) + NAD(+). In terms of biological role, NQR complex catalyzes the reduction of ubiquinone-1 to ubiquinol by two successive reactions, coupled with the transport of Na(+) ions from the cytoplasm to the periplasm. NqrA to NqrE are probably involved in the second step, the conversion of ubisemiquinone to ubiquinol. The polypeptide is Na(+)-translocating NADH-quinone reductase subunit E (Tolumonas auensis (strain DSM 9187 / NBRC 110442 / TA 4)).